Here is a 276-residue protein sequence, read N- to C-terminus: Diaminopimelate epimerase (276 aa).

The substrate site is built by N13, Q46, and N66. C75 acts as the Proton donor in catalysis. Substrate-binding positions include 76-77, N159, N192, and 210-211; these read GN and ER. The Proton acceptor role is filled by C219. 220 to 221 provides a ligand contact to substrate; that stretch reads GT.

Belongs to the diaminopimelate epimerase family. As to quaternary structure, homodimer.

It localises to the cytoplasm. The catalysed reaction is (2S,6S)-2,6-diaminopimelate = meso-2,6-diaminopimelate. It functions in the pathway amino-acid biosynthesis; L-lysine biosynthesis via DAP pathway; DL-2,6-diaminopimelate from LL-2,6-diaminopimelate: step 1/1. Its function is as follows. Catalyzes the stereoinversion of LL-2,6-diaminopimelate (L,L-DAP) to meso-diaminopimelate (meso-DAP), a precursor of L-lysine and an essential component of the bacterial peptidoglycan. This chain is Diaminopimelate epimerase, found in Tolumonas auensis (strain DSM 9187 / NBRC 110442 / TA 4).